The primary structure comprises 182 residues: NADH-quinone oxidoreductase subunit B (182 aa).

4 residues coordinate [4Fe-4S] cluster: Cys47, Cys48, Cys113, and Cys142.

This sequence belongs to the complex I 20 kDa subunit family. In terms of assembly, NDH-1 is composed of 14 different subunits. Subunits NuoB, C, D, E, F, and G constitute the peripheral sector of the complex. [4Fe-4S] cluster serves as cofactor.

It localises to the cell inner membrane. It carries out the reaction a quinone + NADH + 5 H(+)(in) = a quinol + NAD(+) + 4 H(+)(out). NDH-1 shuttles electrons from NADH, via FMN and iron-sulfur (Fe-S) centers, to quinones in the respiratory chain. The immediate electron acceptor for the enzyme in this species is believed to be ubiquinone. Couples the redox reaction to proton translocation (for every two electrons transferred, four hydrogen ions are translocated across the cytoplasmic membrane), and thus conserves the redox energy in a proton gradient. The sequence is that of NADH-quinone oxidoreductase subunit B from Anaeromyxobacter dehalogenans (strain 2CP-1 / ATCC BAA-258).